A 232-amino-acid polypeptide reads, in one-letter code: RNA chaperone ProQ (232 aa).

Residues 105–182 are disordered; sequence EAKARVQAQR…REEQHTPVSD (78 aa). The segment covering 117–136 has biased composition (basic and acidic residues); the sequence is QQAKKREAAATAGEKEDAPR. Basic residues predominate over residues 137-146; it reads RERKPRPTTP. Residues 147–177 show a composition bias toward basic and acidic residues; sequence RRKEGAERKPRAQKPVEKAPKTVKAPREEQH.

This sequence belongs to the ProQ family.

It localises to the cytoplasm. In terms of biological role, RNA chaperone with significant RNA binding, RNA strand exchange and RNA duplexing activities. May regulate ProP activity through an RNA-based, post-transcriptional mechanism. In Escherichia coli (strain K12), this protein is RNA chaperone ProQ.